The primary structure comprises 156 residues: Small ribosomal subunit protein uS7 (156 aa).

This sequence belongs to the universal ribosomal protein uS7 family. As to quaternary structure, part of the 30S ribosomal subunit. Contacts proteins S9 and S11.

One of the primary rRNA binding proteins, it binds directly to 16S rRNA where it nucleates assembly of the head domain of the 30S subunit. Is located at the subunit interface close to the decoding center, probably blocks exit of the E-site tRNA. This is Small ribosomal subunit protein uS7 from Mycolicibacterium smegmatis (strain ATCC 700084 / mc(2)155) (Mycobacterium smegmatis).